Reading from the N-terminus, the 228-residue chain is Isoprenyl transferase (228 aa).

The active site involves Asp9. Mg(2+) is bound at residue Asp9. Residues 10–13 (GNGR), Trp14, Arg22, His26, and 54–56 (STE) each bind substrate. Residue Asn57 is the Proton acceptor of the active site. Residues Trp58, Arg60, Arg175, and 181-183 (RMS) each bind substrate. Glu194 provides a ligand contact to Mg(2+).

Belongs to the UPP synthase family. As to quaternary structure, homodimer. It depends on Mg(2+) as a cofactor.

Functionally, catalyzes the condensation of isopentenyl diphosphate (IPP) with allylic pyrophosphates generating different type of terpenoids. This is Isoprenyl transferase from Treponema pallidum (strain Nichols).